The sequence spans 308 residues: Exosporium protein A (308 aa).

The protein localises to the spore wall. In Clostridium sporogenes (strain ATCC 15579), this protein is Exosporium protein A.